Consider the following 144-residue polypeptide: Large ribosomal subunit protein uL15 (144 aa).

Residues 1–49 (MRLNTLSPAAGAKSAAKRVGRGIGSGTGKTCGRGHKGQKSRSGGGVRVG) are disordered. Gly residues predominate over residues 21 to 31 (RGIGSGTGKTC).

It belongs to the universal ribosomal protein uL15 family. As to quaternary structure, part of the 50S ribosomal subunit.

Binds to the 23S rRNA. In Shewanella sediminis (strain HAW-EB3), this protein is Large ribosomal subunit protein uL15.